We begin with the raw amino-acid sequence, 269 residues long: Probable 3-deoxy-manno-octulosonic acid transferase (269 aa).

It is found in the cytoplasm. It catalyses the reaction an alpha-Kdo-(2-&gt;4)-alpha-Kdo-(2-&gt;6)-lipid IVA + CMP-3-deoxy-beta-D-manno-octulosonate = an alpha-Kdo-(2-&gt;4)-alpha-Kdo-(2-&gt;4)-alpha-Kdo-(2-&gt;6)-lipid IVA + CMP + H(+). It participates in bacterial outer membrane biogenesis; LPS core biosynthesis. Functionally, involved in the biosynthesis of the core oligosaccharide region of lipopolysaccharide (LPS). Required for the addition of 3-deoxy-D-manno-oct-2-ulosonic acid III (KdoIII) to the KdoII residue of the inner lipopolysaccharide core. The chain is Probable 3-deoxy-manno-octulosonic acid transferase from Salmonella typhimurium (strain LT2 / SGSC1412 / ATCC 700720).